Reading from the N-terminus, the 424-residue chain is UDP-glycosyltransferase 76H1 (424 aa).

Residues Ser248, 306-307 (WA), 324-332 (HCGWNSTIE), and 346-349 (FADQ) contribute to the UDP-alpha-D-glucose site.

The protein belongs to the UDP-glycosyltransferase family.

May glycosylate diterpenes or flavonols in leaves. The chain is UDP-glycosyltransferase 76H1 from Stevia rebaudiana (Stevia).